Reading from the N-terminus, the 293-residue chain is Ribosomal protein L11 methyltransferase (293 aa).

S-adenosyl-L-methionine-binding residues include Thr-145, Gly-166, Asp-188, and Asn-229.

This sequence belongs to the methyltransferase superfamily. PrmA family.

It is found in the cytoplasm. The catalysed reaction is L-lysyl-[protein] + 3 S-adenosyl-L-methionine = N(6),N(6),N(6)-trimethyl-L-lysyl-[protein] + 3 S-adenosyl-L-homocysteine + 3 H(+). Functionally, methylates ribosomal protein L11. The sequence is that of Ribosomal protein L11 methyltransferase from Halorhodospira halophila (strain DSM 244 / SL1) (Ectothiorhodospira halophila (strain DSM 244 / SL1)).